Here is a 392-residue protein sequence, read N- to C-terminus: Phosphoglycerate kinase (392 aa).

Residues 21 to 23 (DFN), Arg36, 59 to 62 (HLGR), Arg113, and Arg146 contribute to the substrate site. Residues Lys197, Glu319, and 345-348 (GGDT) each bind ATP.

This sequence belongs to the phosphoglycerate kinase family. As to quaternary structure, monomer.

Its subcellular location is the cytoplasm. It catalyses the reaction (2R)-3-phosphoglycerate + ATP = (2R)-3-phospho-glyceroyl phosphate + ADP. The protein operates within carbohydrate degradation; glycolysis; pyruvate from D-glyceraldehyde 3-phosphate: step 2/5. This Francisella tularensis subsp. tularensis (strain FSC 198) protein is Phosphoglycerate kinase.